The following is a 217-amino-acid chain: Protein MODIFYING WALL LIGNIN-2 (217 aa).

Residues M1 to A23 form the signal peptide. The Cytoplasmic segment spans residues A24–G51. Residues L52–F72 traverse the membrane as a helical segment. Topologically, residues R73–T94 are extracellular. The helical transmembrane segment at V95–I115 threads the bilayer. Residues S116–D137 lie on the Cytoplasmic side of the membrane. Residues G138–A158 form a helical membrane-spanning segment. The Extracellular portion of the chain corresponds to T159–I217. N197 and N213 each carry an N-linked (GlcNAc...) asparagine glycan.

Belongs to the DESIGUAL family.

Its subcellular location is the cell membrane. In terms of biological role, together with MWL1, contributes to secondary cell wall biology, specifically lignin biosynthesis. The chain is Protein MODIFYING WALL LIGNIN-2 from Arabidopsis thaliana (Mouse-ear cress).